The sequence spans 169 residues: Peptide methionine sulfoxide reductase MsrA (169 aa).

C10 is an active-site residue.

The protein belongs to the MsrA Met sulfoxide reductase family.

The catalysed reaction is L-methionyl-[protein] + [thioredoxin]-disulfide + H2O = L-methionyl-(S)-S-oxide-[protein] + [thioredoxin]-dithiol. It catalyses the reaction [thioredoxin]-disulfide + L-methionine + H2O = L-methionine (S)-S-oxide + [thioredoxin]-dithiol. Its function is as follows. Has an important function as a repair enzyme for proteins that have been inactivated by oxidation. Catalyzes the reversible oxidation-reduction of methionine sulfoxide in proteins to methionine. The polypeptide is Peptide methionine sulfoxide reductase MsrA (Streptococcus uberis (strain ATCC BAA-854 / 0140J)).